The following is a 425-amino-acid chain: Oxytetracycline polyketide putative beta-ketoacyl synthase 1 (425 aa).

A Ketosynthase family 3 (KS3) domain is found at A7 to E420. Residues C173, H313, and H350 each act as for beta-ketoacyl synthase activity in the active site.

The protein belongs to the thiolase-like superfamily. Beta-ketoacyl-ACP synthases family.

It participates in antibiotic biosynthesis; oxytetracycline biosynthesis. This is Oxytetracycline polyketide putative beta-ketoacyl synthase 1 from Streptomyces rimosus.